Reading from the N-terminus, the 283-residue chain is Non-selective voltage-gated ion channel VDAC1 (283 aa).

The residue at position 2 (Ala2) is an N-acetylalanine. Residue Lys12 participates in ATP binding. Lys12 participates in a covalent cross-link: Glycyl lysine isopeptide (Lys-Gly) (interchain with G-Cter in ubiquitin). Phosphoserine is present on Ser13. Thr19 is modified (phosphothreonine). Lys20 provides a ligand contact to ATP. Lys20 is subject to N6-acetyllysine; alternate. Lys20 bears the N6-succinyllysine; alternate mark. A Glycyl lysine isopeptide (Lys-Gly) (interchain with G-Cter in ubiquitin); alternate cross-link involves residue Lys20. 2 consecutive transmembrane segments (beta stranded) span residues 26 to 35 (LIKLDLKTKS) and 39 to 47 (LEFTSSGSA). Residues Lys53 and Lys61 each participate in a glycyl lysine isopeptide (Lys-Gly) (interchain with G-Cter in ubiquitin) cross-link. Residues 54 to 64 (VTGSLETKYRW) traverse the membrane as a beta stranded segment. Phosphotyrosine is present on Tyr67. Transmembrane regions (beta stranded) follow at residues 69–76 (LTFTEKWN), 80–89 (TLGTEITVED), and 95–104 (LKLTFDSSFS). The residue at position 107 (Thr107) is a Phosphothreonine. Residue Lys109 is modified to N6-acetyllysine; alternate. A Glycyl lysine isopeptide (Lys-Gly) (interchain with G-Cter in ubiquitin); alternate cross-link involves residue Lys109. Lys110 is covalently cross-linked (Glycyl lysine isopeptide (Lys-Gly) (interchain with G-Cter in ubiquitin)). 4 beta stranded membrane passes run 111 to 120 (NAKIKTGYKR), 123 to 130 (VNLGCDVD), 137 to 145 (SIRGALVLG), and 150 to 158 (LAGYQMNFE). Residue Lys161 forms a Glycyl lysine isopeptide (Lys-Gly) (interchain with G-Cter in ubiquitin) linkage. Beta stranded transmembrane passes span 163–175 (RVTQSNFAVGYKT), 178–185 (FQLHTNVN), 189–198 (EFGGSIYQKV), 202–211 (LETAVNLAWT), 218–227 (RFGIAAKYQI), and 231–238 (ACFSAKVN). Residue Ser193 is modified to Phosphoserine; by NEK1. The residue at position 240 (Ser240) is a Phosphoserine. 242 to 244 (LIG) is an NAD(+) binding site. The chain crosses the membrane as a beta stranded span at residues 242 to 251 (LIGLGYTQTL). At Lys252 the chain carries N6-acetyllysine. Residues 254 to 263 (GIKLTLSALL) form a beta stranded membrane-spanning segment. Residue 260 to 264 (SALLD) participates in NAD(+) binding. At Lys266 the chain carries N6-acetyllysine; alternate. A Glycyl lysine isopeptide (Lys-Gly) (interchain with G-Cter in ubiquitin); alternate cross-link involves residue Lys266. A beta stranded membrane pass occupies residues 273-282 (HKLGLGLEFQ). Lys274 participates in a covalent cross-link: Glycyl lysine isopeptide (Lys-Gly) (interchain with G-Cter in ubiquitin).

It belongs to the eukaryotic mitochondrial porin family. Homodimer and homotrimer; in response to cyclic AMP or calcium; oligomerization is required for scramblase activity. Component of the mitochondrial permeability transition pore complex (mPTPC), at least composed of SPG7, VDAC1 and PPIF. Interacts with SPG7, NIPSNAP2 and SLC25A30. Interacts with hexokinases including HK1. The HK1-VDAC1 complex interacts with ATF2. Interacts with BCL2L1. Interacts with BAK1. Interacts with RTL10/BOP (via BH3 domain). Interacts with amyloid-beta and APP; induces VDAC1 dephosphorylation. Interacts with TMEM41B. Interacts with BCAP31. Interacts with HSPA9; this interaction couples ITPR1 to VDAC1. Post-translationally, phosphorylation at Ser-193 by NEK1 promotes the closed conformational state preventing excessive mitochondrial membrane permeability and subsequent apoptotic cell death after injury. Phosphorylation by the AKT-GSK3B axis stabilizes the protein probably by preventing ubiquitin-mediated proteasomal degradation. Ubiquitinated. Undergoes monoubiquitination and polyubiquitination by PRKN; monoubiquitination at Lys-274 inhibits apoptosis, whereas polyubiquitination leads to its degradation and promotes mitophagy. Deubiquitinated by USP30.

It localises to the mitochondrion outer membrane. It is found in the cell membrane. Its subcellular location is the membrane raft. It catalyses the reaction chloride(in) = chloride(out). It carries out the reaction K(+)(in) = K(+)(out). The enzyme catalyses ATP(in) = ATP(out). The catalysed reaction is Ca(2+)(in) = Ca(2+)(out). It catalyses the reaction Na(+)(in) = Na(+)(out). It carries out the reaction Mg(2+)(in) = Mg(2+)(out). The enzyme catalyses L-glutamate(out) = L-glutamate(in). The catalysed reaction is dopamine(out) = dopamine(in). It catalyses the reaction acetylcholine(in) = acetylcholine(out). It carries out the reaction Fe(III)-[cytochrome c](out) = Fe(III)-[cytochrome c](in). The enzyme catalyses a 1,2-diacyl-sn-glycero-3-phosphocholine(in) = a 1,2-diacyl-sn-glycero-3-phosphocholine(out). The catalysed reaction is a 1,2-diacyl-sn-glycero-3-phospho-L-serine(in) = a 1,2-diacyl-sn-glycero-3-phospho-L-serine(out). Inhibited by nitric oxide. Its function is as follows. Non-selective voltage-gated ion channel that mediates the transport of anions and cations through the mitochondrion outer membrane and plasma membrane. The channel at the outer mitochondrial membrane allows diffusion of small hydrophilic molecules; in the plasma membrane it is involved in cell volume regulation and apoptosis. It adopts an open conformation at low or zero membrane potential and a closed conformation at potentials above 30-40 mV. The open state has a weak anion selectivity whereas the closed state is cation-selective. Binds various signaling molecules, including the sphingolipid ceramide, the phospholipid phosphatidylcholine, and the sterols cholesterol and oxysterol. In depolarized mitochondria, acts downstream of PRKN and PINK1 to promote mitophagy or prevent apoptosis; polyubiquitination by PRKN promotes mitophagy, while monoubiquitination by PRKN decreases mitochondrial calcium influx which ultimately inhibits apoptosis. May participate in the formation of the permeability transition pore complex (PTPC) responsible for the release of mitochondrial products that triggers apoptosis. May mediate ATP export from cells. Part of a complex composed of HSPA9, ITPR1 and VDAC1 that regulates mitochondrial calcium-dependent apoptosis by facilitating calcium transport from the ER lumen to the mitochondria intermembrane space thus providing calcium for the downstream calcium channel MCU that directly releases it into mitochondria matrix. Mediates cytochrome c efflux. In terms of biological role, catalyzes the scrambling of phospholipids across the outer mitochondrial membrane; the mechanism is unrelated to channel activity and is capable of translocating both anionic and zwitterionic phospholipids. The polypeptide is Non-selective voltage-gated ion channel VDAC1 (Sus scrofa (Pig)).